The following is a 384-amino-acid chain: 1-deoxy-D-xylulose 5-phosphate reductoisomerase (384 aa).

Thr10, Gly11, Ser12, Ile13, Arg37, Asn38, and Asn124 together coordinate NADPH. Lys125 is a binding site for 1-deoxy-D-xylulose 5-phosphate. Glu126 contacts NADPH. A Mn(2+)-binding site is contributed by Asp150. Ser151, Glu152, Ser176, and His199 together coordinate 1-deoxy-D-xylulose 5-phosphate. A Mn(2+)-binding site is contributed by Glu152. Gly205 lines the NADPH pocket. 1-deoxy-D-xylulose 5-phosphate-binding residues include Ser212, Asn217, Lys218, and Glu221. Residue Glu221 coordinates Mn(2+).

The protein belongs to the DXR family. Requires Mg(2+) as cofactor. Mn(2+) is required as a cofactor.

It catalyses the reaction 2-C-methyl-D-erythritol 4-phosphate + NADP(+) = 1-deoxy-D-xylulose 5-phosphate + NADPH + H(+). It functions in the pathway isoprenoid biosynthesis; isopentenyl diphosphate biosynthesis via DXP pathway; isopentenyl diphosphate from 1-deoxy-D-xylulose 5-phosphate: step 1/6. Catalyzes the NADPH-dependent rearrangement and reduction of 1-deoxy-D-xylulose-5-phosphate (DXP) to 2-C-methyl-D-erythritol 4-phosphate (MEP). The sequence is that of 1-deoxy-D-xylulose 5-phosphate reductoisomerase from Clostridium perfringens (strain 13 / Type A).